The sequence spans 359 residues: Peptide chain release factor 1 (359 aa).

The residue at position 236 (Gln236) is an N5-methylglutamine.

It belongs to the prokaryotic/mitochondrial release factor family. In terms of processing, methylated by PrmC. Methylation increases the termination efficiency of RF1.

The protein resides in the cytoplasm. Peptide chain release factor 1 directs the termination of translation in response to the peptide chain termination codons UAG and UAA. This is Peptide chain release factor 1 from Streptococcus pneumoniae serotype 2 (strain D39 / NCTC 7466).